The sequence spans 286 residues: tRNA uridine(34) hydroxylase (286 aa).

Residues 130–225 enclose the Rhodanese domain; the sequence is RGDDVVFFDG…YGETFGDRGL (96 aa). C185 acts as the Cysteine persulfide intermediate in catalysis.

It belongs to the TrhO family.

It catalyses the reaction uridine(34) in tRNA + AH2 + O2 = 5-hydroxyuridine(34) in tRNA + A + H2O. Functionally, catalyzes oxygen-dependent 5-hydroxyuridine (ho5U) modification at position 34 in tRNAs. The chain is tRNA uridine(34) hydroxylase from Rhodococcus erythropolis (strain PR4 / NBRC 100887).